We begin with the raw amino-acid sequence, 971 residues long: uncharacterized protein (971 aa).

This is an uncharacterized protein from Borreliella burgdorferi (strain ATCC 35210 / DSM 4680 / CIP 102532 / B31) (Borrelia burgdorferi).